The chain runs to 792 residues: Cadherin-11 (792 aa).

The N-terminal stretch at 1-22 (MKEDNCLHAALICLGMLYYSHA) is a signal peptide. The propeptide occupies 23-53 (ITTEKLNHVRPSLHGHHEKGKEGQVLHRSKR). Cadherin domains lie at 54–159 (GWVW…PPEF), 160–268 (LHEN…PPKF), 269–383 (PQSV…PPVF), 384–486 (LKPS…DNAP), and 487–608 (KFAA…YILN). Residues 54-613 (GWVWNQFFVI…AYILNAGLST (560 aa)) lie on the Extracellular side of the membrane. 3 N-linked (GlcNAc...) asparagine glycosylation sites follow: N455, N536, and N594. A helical transmembrane segment spans residues 614–634 (GALIAILACIVILLVIVVLFV). Residues 635-792 (TLKRQKKEPL…GSKDTFDDDS (158 aa)) are Cytoplasmic-facing.

It is found in the cell membrane. Cadherins are calcium-dependent cell adhesion proteins. They preferentially interact with themselves in a homophilic manner in connecting cells; cadherins may thus contribute to the sorting of heterogeneous cell types. Required for proper focal adhesion assembly. Involved in the regulation of cell migration. In Gallus gallus (Chicken), this protein is Cadherin-11 (CDH11).